The chain runs to 233 residues: Cobalt-containing nitrile hydratase subunit beta (233 aa).

It belongs to the nitrile hydratase subunit beta family. Heterotetramer of two alpha and two beta chains.

The enzyme catalyses an aliphatic primary amide = an aliphatic nitrile + H2O. In terms of biological role, NHase catalyzes the hydration of various nitrile compounds to the corresponding amides. This Pseudonocardia thermophila protein is Cobalt-containing nitrile hydratase subunit beta.